Consider the following 391-residue polypeptide: Inositol-tetrakisphosphate 1-kinase 2 (391 aa).

Positions 90 and 132 each coordinate 1D-myo-inositol 1,3,4-trisphosphate. ATP contacts are provided by Arg-167 and Lys-217. In terms of domain architecture, ATP-grasp spans 178 to 384 (KLSDCSGSLF…FFQNLAQVKY (207 aa)). His-228 and Lys-260 together coordinate 1D-myo-inositol 1,3,4-trisphosphate. ATP-binding positions include 249-260 (QEFVNHGGVMFK) and Ser-275. The Mg(2+) site is built by Asp-340, Asp-355, and Asn-357. Position 357 (Asn-357) interacts with 1D-myo-inositol 1,3,4-trisphosphate.

The protein belongs to the ITPK1 family. In terms of assembly, monomer. Mg(2+) is required as a cofactor. In terms of tissue distribution, expressed in seedling roots, cotyledons, rosette leaves, cauline leaves, stems, flowers, siliques and seeds.

The catalysed reaction is 1D-myo-inositol 3,4,5,6-tetrakisphosphate + ATP = 1D-myo-inositol 1,3,4,5,6-pentakisphosphate + ADP + H(+). It catalyses the reaction 1D-myo-inositol 1,3,4-trisphosphate + ATP = 1D-myo-inositol 1,3,4,5-tetrakisphosphate + ADP + H(+). It carries out the reaction 1D-myo-inositol 1,3,4-trisphosphate + ATP = 1D-myo-inositol 1,3,4,6-tetrakisphosphate + ADP + H(+). Its function is as follows. Kinase that can phosphorylate various inositol polyphosphate such as Ins(3,4,5,6)P4 or Ins(1,3,4)P3. Phosphorylates Ins(3,4,5,6)P4 to form InsP5. This reaction is thought to have regulatory importance, since Ins(3,4,5,6)P4 is an inhibitor of plasma membrane Ca(2+)-activated Cl(-) channels, while Ins(1,3,4,5,6)P5 is not. Also phosphorylates Ins(1,3,4)P3 or a racemic mixture of Ins(1,4,6)P3 and Ins(3,4,6)P3 to form InsP4. Ins(1,3,4,6)P4 is an essential molecule in the hexakisphosphate (InsP6) pathway. Plays a role in seed coat development and lipid polyester barrier formation. The protein is Inositol-tetrakisphosphate 1-kinase 2 (ITPK2) of Arabidopsis thaliana (Mouse-ear cress).